Consider the following 197-residue polypeptide: Dephospho-CoA kinase (197 aa).

The 196-residue stretch at 2–197 folds into the DPCK domain; the sequence is IVGLTGGIAS…YQQILSLNAA (196 aa). 10 to 15 provides a ligand contact to ATP; that stretch reads ASGKTL.

The protein belongs to the CoaE family.

The protein localises to the cytoplasm. It carries out the reaction 3'-dephospho-CoA + ATP = ADP + CoA + H(+). It participates in cofactor biosynthesis; coenzyme A biosynthesis; CoA from (R)-pantothenate: step 5/5. Catalyzes the phosphorylation of the 3'-hydroxyl group of dephosphocoenzyme A to form coenzyme A. The sequence is that of Dephospho-CoA kinase from Dichelobacter nodosus (Bacteroides nodosus).